The chain runs to 161 residues: Nucleotide-binding protein Bcep18194_A5887 (161 aa).

The protein belongs to the YajQ family.

Functionally, nucleotide-binding protein. The protein is Nucleotide-binding protein Bcep18194_A5887 of Burkholderia lata (strain ATCC 17760 / DSM 23089 / LMG 22485 / NCIMB 9086 / R18194 / 383).